We begin with the raw amino-acid sequence, 147 residues long: Hemoglobin subunit gamma-2 (147 aa).

Residues 3-147 (NFTAEDKAAI…VASALGSRYH (145 aa)) form the Globin domain. Thr13 carries the phosphothreonine modification. A phosphoserine mark is found at Ser45, Ser51, and Ser53. Lys60 bears the N6-acetyllysine mark. Heme b is bound at residue His64. Lys83 is subject to N6-acetyllysine. His93 is a heme b binding site. Cys94 is modified (S-nitrosocysteine). Phosphoserine is present on residues Ser140 and Ser144.

Belongs to the globin family. Heterotetramer of two alpha chains and two gamma chains in fetal hemoglobin (Hb F). Red blood cells.

Gamma chains make up the fetal hemoglobin F, in combination with alpha chains. The chain is Hemoglobin subunit gamma-2 (HBG2) from Cebus albifrons (White-fronted capuchin).